Reading from the N-terminus, the 513-residue chain is tRNA-2-methylthio-N(6)-dimethylallyladenosine synthase (513 aa).

The MTTase N-terminal domain occupies 67-185 (KTFLIKTYGC…LPEILEEAYL (119 aa)). Residues Cys76, Cys112, Cys146, Cys222, Cys226, and Cys229 each contribute to the [4Fe-4S] cluster site. A Radical SAM core domain is found at 208-438 (REGNIKAWVN…NKKVACYSER (231 aa)). Residues 441-504 (QQYEGQTVQV…QFSLNGTFIS (64 aa)) enclose the TRAM domain.

It belongs to the methylthiotransferase family. MiaB subfamily. Monomer. [4Fe-4S] cluster is required as a cofactor.

The protein resides in the cytoplasm. It carries out the reaction N(6)-dimethylallyladenosine(37) in tRNA + (sulfur carrier)-SH + AH2 + 2 S-adenosyl-L-methionine = 2-methylsulfanyl-N(6)-dimethylallyladenosine(37) in tRNA + (sulfur carrier)-H + 5'-deoxyadenosine + L-methionine + A + S-adenosyl-L-homocysteine + 2 H(+). Functionally, catalyzes the methylthiolation of N6-(dimethylallyl)adenosine (i(6)A), leading to the formation of 2-methylthio-N6-(dimethylallyl)adenosine (ms(2)i(6)A) at position 37 in tRNAs that read codons beginning with uridine. In Staphylococcus saprophyticus subsp. saprophyticus (strain ATCC 15305 / DSM 20229 / NCIMB 8711 / NCTC 7292 / S-41), this protein is tRNA-2-methylthio-N(6)-dimethylallyladenosine synthase.